We begin with the raw amino-acid sequence, 409 residues long: Tryptophan synthase beta chain (409 aa).

Position 95 is an N6-(pyridoxal phosphate)lysine (lysine 95).

This sequence belongs to the TrpB family. As to quaternary structure, tetramer of two alpha and two beta chains. Pyridoxal 5'-phosphate is required as a cofactor.

The enzyme catalyses (1S,2R)-1-C-(indol-3-yl)glycerol 3-phosphate + L-serine = D-glyceraldehyde 3-phosphate + L-tryptophan + H2O. The protein operates within amino-acid biosynthesis; L-tryptophan biosynthesis; L-tryptophan from chorismate: step 5/5. The beta subunit is responsible for the synthesis of L-tryptophan from indole and L-serine. The sequence is that of Tryptophan synthase beta chain from Pseudomonas syringae pv. tomato (strain ATCC BAA-871 / DC3000).